The chain runs to 171 residues: Non-specific lipid transfer protein GPI-anchored 19 (171 aa).

The signal sequence occupies residues 1–18 (MILAILALVIATFLYGGA). 4 disulfides stabilise this stretch: Cys-25–Cys-66, Cys-35–Cys-50, Cys-51–Cys-93, and Cys-64–Cys-103. Residues Asn-72 and Asn-82 are each glycosylated (N-linked (GlcNAc...) asparagine). A disordered region spans residues 113 to 149 (LPANTPVGSPRSAPSPSGTTSPANTPSGSKKFPLSNE). Low complexity predominate over residues 118–141 (PVGSPRSAPSPSGTTSPANTPSGS). The GPI-anchor amidated serine moiety is linked to residue Ser-147. Asn-148 is a glycosylation site (N-linked (GlcNAc...) asparagine). A propeptide spans 148–171 (NESSSKSNVIILSFVSIALVLAII) (removed in mature form).

The protein belongs to the plant LTP family.

The protein resides in the cell membrane. Probable lipid transfer protein. This chain is Non-specific lipid transfer protein GPI-anchored 19, found in Arabidopsis thaliana (Mouse-ear cress).